Consider the following 149-residue polypeptide: Large ribosomal subunit protein uL15 (149 aa).

The segment covering 1–11 (MSDPIKLHDLR) has biased composition (basic and acidic residues). The disordered stretch occupies residues 1–44 (MSDPIKLHDLRPAPGAKKAKTRVGRGEASKGKTAGRGTKGTKAR).

It belongs to the universal ribosomal protein uL15 family. As to quaternary structure, part of the 50S ribosomal subunit.

Binds to the 23S rRNA. In Corynebacterium jeikeium (strain K411), this protein is Large ribosomal subunit protein uL15.